The chain runs to 154 residues: Putative hydrogenase maturation protease MJ0253 (154 aa).

Belongs to the peptidase A31 family.

The sequence is that of Putative hydrogenase maturation protease MJ0253 from Methanocaldococcus jannaschii (strain ATCC 43067 / DSM 2661 / JAL-1 / JCM 10045 / NBRC 100440) (Methanococcus jannaschii).